The primary structure comprises 131 residues: Translation initiation factor 5A (131 aa).

Hypusine is present on K37.

This sequence belongs to the eIF-5A family.

It localises to the cytoplasm. In terms of biological role, functions by promoting the formation of the first peptide bond. This Methanococcus maripaludis (strain DSM 14266 / JCM 13030 / NBRC 101832 / S2 / LL) protein is Translation initiation factor 5A.